The following is a 314-amino-acid chain: MKIILANPRGFCAGVDRAISIVELALEIHGAPIYVRHEVVHNRFVVNGLRERGAIFVEELSEVPDGAIVIFSAHGVSQAVRQEAKDRNLKVFDATCPLVTKVHMQVARASRKGTKAILIGHKGHPEVEGTMGQYSNEDGGIFLIEKVEDIARLPMQENDNLTFMTQTTLSLDDTAETIAALKEKYPAIQGPHKNDICYATTNRQEAVRELAKLSDLVLVVGSKNSSNSNRLAELASRMGVKSQLLDDPADIQADWFNDVKTIGITAGASAPEELVQSIISRLKRFGANSIEELQGLEENMFFEVPKELRIKEVN.

[4Fe-4S] cluster is bound at residue Cys-12. His-41 and His-74 together coordinate (2E)-4-hydroxy-3-methylbut-2-enyl diphosphate. 2 residues coordinate dimethylallyl diphosphate: His-41 and His-74. Isopentenyl diphosphate contacts are provided by His-41 and His-74. Residue Cys-96 coordinates [4Fe-4S] cluster. (2E)-4-hydroxy-3-methylbut-2-enyl diphosphate is bound at residue His-124. His-124 contributes to the dimethylallyl diphosphate binding site. Residue His-124 coordinates isopentenyl diphosphate. Glu-126 functions as the Proton donor in the catalytic mechanism. Position 167 (Thr-167) interacts with (2E)-4-hydroxy-3-methylbut-2-enyl diphosphate. Residue Cys-197 coordinates [4Fe-4S] cluster. Residues Ser-225, Ser-226, Asn-227, and Ser-269 each coordinate (2E)-4-hydroxy-3-methylbut-2-enyl diphosphate. Positions 225, 226, 227, and 269 each coordinate dimethylallyl diphosphate. Ser-225, Ser-226, Asn-227, and Ser-269 together coordinate isopentenyl diphosphate.

This sequence belongs to the IspH family. [4Fe-4S] cluster serves as cofactor.

The catalysed reaction is isopentenyl diphosphate + 2 oxidized [2Fe-2S]-[ferredoxin] + H2O = (2E)-4-hydroxy-3-methylbut-2-enyl diphosphate + 2 reduced [2Fe-2S]-[ferredoxin] + 2 H(+). It catalyses the reaction dimethylallyl diphosphate + 2 oxidized [2Fe-2S]-[ferredoxin] + H2O = (2E)-4-hydroxy-3-methylbut-2-enyl diphosphate + 2 reduced [2Fe-2S]-[ferredoxin] + 2 H(+). It functions in the pathway isoprenoid biosynthesis; dimethylallyl diphosphate biosynthesis; dimethylallyl diphosphate from (2E)-4-hydroxy-3-methylbutenyl diphosphate: step 1/1. Its pathway is isoprenoid biosynthesis; isopentenyl diphosphate biosynthesis via DXP pathway; isopentenyl diphosphate from 1-deoxy-D-xylulose 5-phosphate: step 6/6. In terms of biological role, catalyzes the conversion of 1-hydroxy-2-methyl-2-(E)-butenyl 4-diphosphate (HMBPP) into a mixture of isopentenyl diphosphate (IPP) and dimethylallyl diphosphate (DMAPP). Acts in the terminal step of the DOXP/MEP pathway for isoprenoid precursor biosynthesis. The protein is 4-hydroxy-3-methylbut-2-enyl diphosphate reductase of Haemophilus influenzae (strain PittEE).